The sequence spans 523 residues: Sensory neuron membrane protein 1 (523 aa).

The Cytoplasmic segment spans residues 1–10 (MRLARGIKYA). The helical transmembrane segment at 11-31 (VIGAGVALFGVLFGWVMFPAI) threads the bilayer. At 32–458 (LKSQLKKEMA…NQLFIPKRIV (427 aa)) the chain is on the extracellular side. 2 N-linked (GlcNAc...) asparagine glycosylation sites follow: Asn67 and Asn229. Cystine bridges form between Cys268-Cys333, Cys297-Cys352, and Cys335-Cys341. The N-linked (GlcNAc...) asparagine glycan is linked to Asn440. Residues 459-479 (SVIRWWLLSFGMLAALGGVIF) traverse the membrane as a helical segment. The Cytoplasmic segment spans residues 480–523 (HFKDDIMRIAIKGDSSVTKVNPEDGEQKDVSVIGQSHEPPKINM). The tract at residues 499–523 (VNPEDGEQKDVSVIGQSHEPPKINM) is disordered.

It belongs to the CD36 family. Localizes to both male and female antennae but not the leg, wing, gut, head, or thoracic ganglia. Detected throughout the sensory epithelium, associating with both sex-pheromone sensilla and plant-volatile sensilla. Differentially expressed both among different sensilla and different neurons within a given sensillum. Expression coincides with that of several other olfactory-specific proteins that are involved in odor detection.

It localises to the cell membrane. In terms of biological role, plays an olfactory role that is not restricted to pheromone sensitivity. In Manduca sexta (Tobacco hawkmoth), this protein is Sensory neuron membrane protein 1.